A 354-amino-acid chain; its full sequence is Protein Wnt-11 (354 aa).

Residues 1–24 (MKPSPQFFLAAFLSLILQTGICYG) form the signal peptide. N-linked (GlcNAc...) asparagine glycosylation is found at asparagine 40 and asparagine 90. Cystine bridges form between cysteine 80–cysteine 91, cysteine 130–cysteine 138, cysteine 140–cysteine 157, cysteine 209–cysteine 223, cysteine 211–cysteine 218, cysteine 283–cysteine 314, cysteine 299–cysteine 309, cysteine 313–cysteine 353, cysteine 329–cysteine 344, cysteine 331–cysteine 341, and cysteine 336–cysteine 337. Serine 215 is lipidated: O-palmitoleoyl serine; by PORCN. 2 N-linked (GlcNAc...) asparagine glycosylation sites follow: asparagine 300 and asparagine 304.

It belongs to the Wnt family. Post-translationally, palmitoleoylation is required for efficient binding to frizzled receptors. Depalmitoleoylation leads to Wnt signaling pathway inhibition. Expressed in the dermatome. The expression domain is mutually exclusive to the other Wnt genes.

Its subcellular location is the secreted. It is found in the extracellular space. The protein localises to the extracellular matrix. Functionally, ligand for members of the frizzled family of seven transmembrane receptors. May play a role in the formation of dermal structure, both limb and feather buds. Is likely to signal over only few cell diameters. The chain is Protein Wnt-11 (WNT11) from Gallus gallus (Chicken).